The following is a 263-amino-acid chain: Ribosomal RNA small subunit methyltransferase J (263 aa).

S-adenosyl-L-methionine is bound by residues 108-109 (RD), 124-125 (ER), and D178.

Belongs to the methyltransferase superfamily. RsmJ family.

It localises to the cytoplasm. The enzyme catalyses guanosine(1516) in 16S rRNA + S-adenosyl-L-methionine = N(2)-methylguanosine(1516) in 16S rRNA + S-adenosyl-L-homocysteine + H(+). Specifically methylates the guanosine in position 1516 of 16S rRNA. The chain is Ribosomal RNA small subunit methyltransferase J from Idiomarina loihiensis (strain ATCC BAA-735 / DSM 15497 / L2-TR).